The primary structure comprises 282 residues: Protoheme IX farnesyltransferase (282 aa).

9 helical membrane-spanning segments follow: residues 9 to 29 (LAKPGIIFGNLITLTGGFLLA), 39 to 59 (LPLFVYVMIGVALMIAAGCVF), 79 to 99 (LVTGDISVIQATIYGTILLIL), 102 to 122 (LVLYYLVILLTLWIIIIGFIV), 139 to 159 (VLGGISGAIPPVAGYTAVVNI), 165 to 185 (LALFLILFFWQIPHSYAIAML), 210 to 230 (IMLFYLALFVVSCALPAVLGS), 231 to 251 (ADLFSFIVCMLVALFWMYKSI), and 261 to 281 (VFAKTVFKFSIIVITVICLTM).

The protein belongs to the UbiA prenyltransferase family. Protoheme IX farnesyltransferase subfamily.

It localises to the cell inner membrane. The catalysed reaction is heme b + (2E,6E)-farnesyl diphosphate + H2O = Fe(II)-heme o + diphosphate. Its pathway is porphyrin-containing compound metabolism; heme O biosynthesis; heme O from protoheme: step 1/1. Its function is as follows. Converts heme B (protoheme IX) to heme O by substitution of the vinyl group on carbon 2 of heme B porphyrin ring with a hydroxyethyl farnesyl side group. The chain is Protoheme IX farnesyltransferase from Francisella tularensis subsp. tularensis (strain FSC 198).